Reading from the N-terminus, the 869-residue chain is MEAVAELSAPSLAGAPGEYTWIVAVAGVTCFLTAFAIGANDVANTFSSSVGSRAIPLWAAIGMSAVLETVGATLLGGAVTDSIRSKIIDFEVFRETPSILMTGMLCALVGAGLWLFLANHLGLPVSTTHSIIGALLGFGLASGNVRAVKWTQVAFIVGSWVAAPLAASAAGATIFVCMRRLILRSRQPLRRAKRFLWIFIYLITLTFSVFLVFKNFFELNVSCDQMVAGGRVEHFEPCRISRWADAHSGTALGIAVALSVALTFVISCLVYRFAFYRVESYRRRQKRSSRTEPRDASEEGTGPSHARPGGLLLTPRSCVAKEGERRPGALEDALRLAGEENARIASAESRLQKPPPLECMDTCADSLQINDGRAAAAKPDVGTAAQSPESRFAADPVGSSVPDRSVLAFSRSLAEDAQAAFHASVQHCASPRCSAASRGDSRYPLQRSTSDFSAFLSSPSSSVPPSSPSPSSTPSSPSASPRRPPSRPPVPRTCSPAPVSPSVPRAFASTATHGHPPALSDTDADTPEGPDRRRQSAALAGAKDAEASPLFADLAPHPERRDEVPAAKRERDARRTLLLPPRVTGEAPEGFFAPTVSHDDNGLVFVSQADLADSLGSGVDEEEDAPRSWRGKLKAAWRSMPWFKDIHAEGSTEDDLVARLQTGAEVFDTETELFFSACQVVSACMGCIAHSANDTANAIGPFAAILTVYQSGSADSEIGSPWYILLFGGLSMSLGLALLGYRVIKTVGVKLVKITPARGFSMELGAAWTVLIFSAIGIPLSTTHCAVGSTVGVGLMEPKHPRRETGDGPVAEGEEPKKRAVQCPVINTASVNWKLFGGVFVSWIITIAFSALVTAALFSFAAYSPRMVS.

Over 1-18 (MEAVAELSAPSLAGAPGE) the chain is Extracellular. Residues 19–39 (YTWIVAVAGVTCFLTAFAIGA) traverse the membrane as a helical segment. The Cytoplasmic segment spans residues 40–54 (NDVANTFSSSVGSRA). The helical transmembrane segment at 55 to 75 (IPLWAAIGMSAVLETVGATLL) threads the bilayer. The Extracellular portion of the chain corresponds to 76–97 (GGAVTDSIRSKIIDFEVFRETP). The chain crosses the membrane as a helical span at residues 98-118 (SILMTGMLCALVGAGLWLFLA). At 119–120 (NH) the chain is on the cytoplasmic side. The helical transmembrane segment at 121–141 (LGLPVSTTHSIIGALLGFGLA) threads the bilayer. Residues 142-154 (SGNVRAVKWTQVA) are Extracellular-facing. The chain crosses the membrane as a helical span at residues 155-175 (FIVGSWVAAPLAASAAGATIF). The Cytoplasmic portion of the chain corresponds to 176 to 196 (VCMRRLILRSRQPLRRAKRFL). Residues 197 to 217 (WIFIYLITLTFSVFLVFKNFF) form a helical membrane-spanning segment. The Extracellular portion of the chain corresponds to 218–250 (ELNVSCDQMVAGGRVEHFEPCRISRWADAHSGT). A helical transmembrane segment spans residues 251 to 271 (ALGIAVALSVALTFVISCLVY). Residues 272-720 (RFAFYRVESY…SGSADSEIGS (449 aa)) are Cytoplasmic-facing. Disordered regions lie at residues 286 to 312 (KRSS…GGLL), 374 to 401 (AAAA…GSSV), and 453 to 571 (SAFL…KRER). The span at 457 to 481 (SSPSSSVPPSSPSPSSTPSSPSASP) shows a compositional bias: low complexity. Over residues 482-491 (RRPPSRPPVP) the composition is skewed to pro residues. Low complexity predominate over residues 492–509 (RTCSPAPVSPSVPRAFAS). Positions 556 to 571 (PHPERRDEVPAAKRER) are enriched in basic and acidic residues. A helical transmembrane segment spans residues 721–741 (PWYILLFGGLSMSLGLALLGY). Over 742–759 (RVIKTVGVKLVKITPARG) the chain is Extracellular. A helical membrane pass occupies residues 760–780 (FSMELGAAWTVLIFSAIGIPL). At 781–837 (STTHCAVGSTVGVGLMEPKHPRRETGDGPVAEGEEPKKRAVQCPVINTASVNWKLFG) the chain is on the cytoplasmic side. Residues 838 to 858 (GVFVSWIITIAFSALVTAALF) form a helical membrane-spanning segment. The Extracellular segment spans residues 859–869 (SFAAYSPRMVS).

This sequence belongs to the inorganic phosphate transporter (PiT) (TC 2.A.20) family.

The protein resides in the cell membrane. It localises to the vacuole membrane. Its subcellular location is the cytoplasmic vesicle membrane. The catalysed reaction is 2 Na(+)(out) + phosphate(out) = 2 Na(+)(in) + phosphate(in). Functionally, sodium-phosphate symporter which preferentially transports the monovalent form of phosphate with a stoichiometry of two sodium ions per phosphate ion. Plays a role in stabilizing the cytosolic pH and osmoregulation. May be required for optimal virulence of parasites in vivo. This Toxoplasma gondii (strain ATCC 50861 / VEG) protein is Sodium-dependent phosphate transporter.